The sequence spans 1640 residues: RING finger protein 17 (1640 aa).

The segment at 30-73 adopts an RING-type zinc-finger fold; sequence CTRCGRKVSVASGDHHKFPCGHAFCELCLLAPQEYTTSKCTDCE. S134 is modified (phosphoserine). Residue K229 is modified to N6-acetyllysine. Disordered stretches follow at residues 348–376 and 413–435; these read TDET…TKEM and DDPI…APVG. Residues 360-373 are compositionally biased toward basic and acidic residues; that stretch reads APDRHLEGKKKQPT. 2 Tudor domains span residues 751-809 and 985-1044; these read CPLQ…FLEP and KWEC…LKTM. The span at 1170–1184 shows a compositional bias: basic and acidic residues; that stretch reads NEHKVPDSKGKKSES. The tract at residues 1170 to 1191 is disordered; it reads NEHKVPDSKGKKSESRSTGCYR. Tudor domains follow at residues 1246 to 1303 and 1496 to 1556; these read SWKK…PDTP and DFSS…LMQY.

Interacts with MXD1, MXD3, MXD4, MXI1 and PIWIL1. Self-associates. As to expression, expressed at high levels in adult testis. Expressed in male germ cells (at protein level). Expressed at lower levels in adult thyroid, submaxillary gland, ovary and epididymis.

It localises to the cytoplasm. It is found in the nucleus. Its function is as follows. Seems to be involved in regulation of transcriptional activity of MYC. In vitro, inhibits DNA-binding activity of Mad-MAX heterodimers. Can recruit Mad transcriptional repressors (MXD1, MXD3, MXD4 and MXI1) to the cytoplasm. May be involved in spermiogenesis. In Mus musculus (Mouse), this protein is RING finger protein 17 (Rnf17).